The sequence spans 523 residues: MTVSRLLKDRVRYAPYLKKVKPVEELIPLFKDGQYIGWSGFTGVGAPKAVPEALIKHVEENNLQGKLRFNLFVGASAGPEECKWAEHDMILRRAPHQVGKPIAKAINDGRIQFFDKHLSMFPQDLTYGYYSRNRTDGKILDYTIIEATAIKEDGSIVPGPSVGGSPEFISVSDKIIIEVNTATPSFEGLHDIDMPVNPPFRQPYPYTAVDQKNGLDSIPVDPERVVAVVESTQRDVVGPNTPSDATSQSIARHLVEFFENEVRHGRLPENLHPLQSGIGNIANAVIEGLTDSSFKNLTVWTEVLQDSFLDLFENGALDYATATSIRLTEAGFQKFFDNWDDFSKKLCLRSQVVSNNPELIRRLGVIAMNTPVEVDIYAHANSTNVSGSRMLNGLGGSADFLRNAKLSIMHAPAARPTKTDPTGISTIVPMASHVDQTEHDLDVLVTDQGLADLRGLSPRERAREIIKNCAHPDYQPILTDYLDRSEHYAKLHKCMHEPHMLKNAFKFHLNLSEKGTMKVDNWD.

277–281 is a CoA binding site; that stretch reads GIGNI. Catalysis depends on E302, which acts as the 5-glutamyl coenzyme A thioester intermediate. Residues N392 and G396 each contribute to the CoA site.

This sequence belongs to the acetyl-CoA hydrolase/transferase family.

The protein localises to the cytoplasm. The enzyme catalyses acetyl-CoA + H2O = acetate + CoA + H(+). Functionally, presumably involved in regulating the intracellular acetyl-CoA pool for fatty acid and cholesterol synthesis and fatty acid oxidation. The sequence is that of Acetyl-CoA hydrolase (ACH1) from Kluyveromyces lactis (strain ATCC 8585 / CBS 2359 / DSM 70799 / NBRC 1267 / NRRL Y-1140 / WM37) (Yeast).